A 127-amino-acid chain; its full sequence is Large ribosomal subunit protein bL12 (127 aa).

This sequence belongs to the bacterial ribosomal protein bL12 family. As to quaternary structure, homodimer. Part of the ribosomal stalk of the 50S ribosomal subunit. Forms a multimeric L10(L12)X complex, where L10 forms an elongated spine to which 2 to 4 L12 dimers bind in a sequential fashion. Binds GTP-bound translation factors.

Forms part of the ribosomal stalk which helps the ribosome interact with GTP-bound translation factors. Is thus essential for accurate translation. The protein is Large ribosomal subunit protein bL12 of Symbiobacterium thermophilum (strain DSM 24528 / JCM 14929 / IAM 14863 / T).